We begin with the raw amino-acid sequence, 256 residues long: MLKIADKTFQSRLFTGTGKFSNRHVMAEALAASGSELVTMALKRIDLAQRDDDILAPLLSMQMNLLPNTSGAKNAADAVYAAELAREALATNWLKLEIHPDPKYLMPDPIETLLAAEQLVKQGFIVLPYCHADPVLCKRLEEVGCAAVMPLGSPIGSNQGLASKTFLEIIIDQAKVPVIVDAGIGSPSDAAQAMELGADAVLVNTAIAAAHDPIAMAKAFKLAVEAGRMAYESGLPSRVKMATASSPLTGFLDFVS.

Residue Lys95 is the Schiff-base intermediate with DXP of the active site. Residues Gly156, 182–183, and 204–205 each bind 1-deoxy-D-xylulose 5-phosphate; these read AG and NT.

The protein belongs to the ThiG family. As to quaternary structure, homotetramer. Forms heterodimers with either ThiH or ThiS.

The protein localises to the cytoplasm. It carries out the reaction [ThiS sulfur-carrier protein]-C-terminal-Gly-aminoethanethioate + 2-iminoacetate + 1-deoxy-D-xylulose 5-phosphate = [ThiS sulfur-carrier protein]-C-terminal Gly-Gly + 2-[(2R,5Z)-2-carboxy-4-methylthiazol-5(2H)-ylidene]ethyl phosphate + 2 H2O + H(+). The protein operates within cofactor biosynthesis; thiamine diphosphate biosynthesis. Its function is as follows. Catalyzes the rearrangement of 1-deoxy-D-xylulose 5-phosphate (DXP) to produce the thiazole phosphate moiety of thiamine. Sulfur is provided by the thiocarboxylate moiety of the carrier protein ThiS. In vitro, sulfur can be provided by H(2)S. The sequence is that of Thiazole synthase from Vibrio cholerae serotype O1 (strain ATCC 39541 / Classical Ogawa 395 / O395).